The primary structure comprises 428 residues: RF4 protein (428 aa).

N8, N205, and N344 each carry an N-linked (GlcNAc...) asparagine glycan.

Its function is as follows. Not known. This chain is RF4 protein (RF4), found in Kluyveromyces lactis (strain ATCC 8585 / CBS 2359 / DSM 70799 / NBRC 1267 / NRRL Y-1140 / WM37) (Yeast).